Consider the following 67-residue polypeptide: Large ribosomal subunit protein uL29 (67 aa).

It belongs to the universal ribosomal protein uL29 family.

The protein is Large ribosomal subunit protein uL29 of Sphingopyxis alaskensis (strain DSM 13593 / LMG 18877 / RB2256) (Sphingomonas alaskensis).